We begin with the raw amino-acid sequence, 300 residues long: MKKIKCALIGSGNIGTDLLYKLKRSEILEPVWMVGIDPDSEGLARARELGIKTTADGIDGLIPHIEADEIKIAFDATSAYVHGENSAKVNAKGVLMIDLTPAAIGPFCVPPVNLNQLNADIKNVNMVTCGGQATIPMVAAVSRVQPVEYGEIVATVSSKSVGPGTRQNIDEFTRTTSGAVEQIGGAKKGKAIIIINPAEPPLLMRDTIHCLTETEPDQAAITASVHEMIAEVQKYVPGYKLKNGPVFDGRKVSIFLEVEGLGDYLPKYAGNLDIMTASAARTAEMFALQMLGQSPSDSQS.

11–14 (SGNI) is a binding site for NAD(+). Catalysis depends on Cys-129, which acts as the Acyl-thioester intermediate. Residues 160–168 (SVGPGTRQN) and Asn-271 contribute to the NAD(+) site.

Belongs to the acetaldehyde dehydrogenase family.

The enzyme catalyses acetaldehyde + NAD(+) + CoA = acetyl-CoA + NADH + H(+). The polypeptide is Acetaldehyde dehydrogenase (mhpF) (Pseudoalteromonas translucida (strain TAC 125)).